Here is a 249-residue protein sequence, read N- to C-terminus: Type III pantothenate kinase (249 aa).

Residue 6 to 13 participates in ATP binding; it reads DIGNSRTK. Substrate is bound by residues Y89 and 96 to 99; that span reads GIDR. Catalysis depends on D98, which acts as the Proton acceptor. D119 contacts K(+). T122 provides a ligand contact to ATP. Substrate is bound at residue T174.

It belongs to the type III pantothenate kinase family. As to quaternary structure, homodimer. Requires NH4(+) as cofactor. It depends on K(+) as a cofactor.

The protein localises to the cytoplasm. It catalyses the reaction (R)-pantothenate + ATP = (R)-4'-phosphopantothenate + ADP + H(+). Its pathway is cofactor biosynthesis; coenzyme A biosynthesis; CoA from (R)-pantothenate: step 1/5. Its function is as follows. Catalyzes the phosphorylation of pantothenate (Pan), the first step in CoA biosynthesis. The protein is Type III pantothenate kinase of Colwellia psychrerythraea (strain 34H / ATCC BAA-681) (Vibrio psychroerythus).